The chain runs to 389 residues: S-adenosylmethionine synthase (389 aa).

An ATP-binding site is contributed by histidine 19. Mg(2+) is bound at residue aspartate 21. A K(+)-binding site is contributed by glutamate 47. The L-methionine site is built by glutamate 60 and glutamine 103. Residues 103–113 form a flexible loop region; that stretch reads QSVDIAQGVSR. Residues 168 to 170, 234 to 235, aspartate 243, 249 to 250, alanine 266, and lysine 270 each bind ATP; these read DGK, RF, and RK. Aspartate 243 is an L-methionine binding site. Lysine 274 serves as a coordination point for L-methionine.

Belongs to the AdoMet synthase family. Homotetramer; dimer of dimers. Mg(2+) is required as a cofactor. It depends on K(+) as a cofactor.

The protein resides in the cytoplasm. It carries out the reaction L-methionine + ATP + H2O = S-adenosyl-L-methionine + phosphate + diphosphate. The protein operates within amino-acid biosynthesis; S-adenosyl-L-methionine biosynthesis; S-adenosyl-L-methionine from L-methionine: step 1/1. Its function is as follows. Catalyzes the formation of S-adenosylmethionine (AdoMet) from methionine and ATP. The overall synthetic reaction is composed of two sequential steps, AdoMet formation and the subsequent tripolyphosphate hydrolysis which occurs prior to release of AdoMet from the enzyme. The sequence is that of S-adenosylmethionine synthase from Solidesulfovibrio magneticus (strain ATCC 700980 / DSM 13731 / RS-1) (Desulfovibrio magneticus).